We begin with the raw amino-acid sequence, 335 residues long: UPF0324 membrane protein gbs1193 (335 aa).

Transmembrane regions (helical) follow at residues 20–42 (SWLLGLYLPLIGAPVFAILIGII), 57–79 (IAFTSKYILQTAVVLLGFGLNLM), 84–106 (VGISSLPIIIMTISISLIIAYVL), 116–138 (IATLIGVGSSICGGSAIAATAPV), 151–173 (SVIFLFNILAALIFPTLGNFIGL), 210–232 (GATIVKLTRTLAIIPITIVLSIY), 253–275 (VLYFILASLLTTIVASLGFSLRI), 285–304 (FFIVMAMGAIGINTNVSKLI), and 311–333 (ILLGAACWLGIIIVSLTMQAILG).

It belongs to the UPF0324 family.

It is found in the cell membrane. In Streptococcus agalactiae serotype III (strain NEM316), this protein is UPF0324 membrane protein gbs1193.